Consider the following 211-residue polypeptide: tRNA (guanine-N(7)-)-methyltransferase (211 aa).

Residues Glu-44, Asp-69, Asp-96, and Asp-118 each coordinate S-adenosyl-L-methionine. Asp-118 is a catalytic residue. A substrate-binding site is contributed by Lys-122. The interaction with RNA stretch occupies residues 124 to 129 (RHEKRR). Substrate contacts are provided by residues Asp-154 and 191–194 (TEYE).

Belongs to the class I-like SAM-binding methyltransferase superfamily. TrmB family.

The enzyme catalyses guanosine(46) in tRNA + S-adenosyl-L-methionine = N(7)-methylguanosine(46) in tRNA + S-adenosyl-L-homocysteine. The protein operates within tRNA modification; N(7)-methylguanine-tRNA biosynthesis. Catalyzes the formation of N(7)-methylguanine at position 46 (m7G46) in tRNA. In Streptococcus equi subsp. zooepidemicus (strain MGCS10565), this protein is tRNA (guanine-N(7)-)-methyltransferase.